A 599-amino-acid chain; its full sequence is Sulfite reductase [NADPH] flavoprotein alpha-component (599 aa).

A Flavodoxin-like domain is found at 64 to 202 (ITIISASQTG…AASEWRARVV (139 aa)). FMN-binding positions include 70-75 (SQTGNA), 117-120 (STQG), and 153-162 (LGDSSYEFFC). Positions 234-448 (DAPLVASLSV…IEHNDNFRLP (215 aa)) constitute an FAD-binding FR-type domain. FAD contacts are provided by residues threonine 322, alanine 356, 386-389 (RLYS), 404-406 (TVG), tyrosine 410, and 419-422 (GGAS). NADP(+) contacts are provided by residues 519 to 520 (SR), 525 to 529 (KVYVQ), and aspartate 561. Tyrosine 599 contacts FAD.

Belongs to the NADPH-dependent sulphite reductase flavoprotein subunit CysJ family. This sequence in the N-terminal section; belongs to the flavodoxin family. The protein in the C-terminal section; belongs to the flavoprotein pyridine nucleotide cytochrome reductase family. As to quaternary structure, alpha(8)-beta(8). The alpha component is a flavoprotein, the beta component is a hemoprotein. FAD serves as cofactor. It depends on FMN as a cofactor.

It catalyses the reaction hydrogen sulfide + 3 NADP(+) + 3 H2O = sulfite + 3 NADPH + 4 H(+). The protein operates within sulfur metabolism; hydrogen sulfide biosynthesis; hydrogen sulfide from sulfite (NADPH route): step 1/1. In terms of biological role, component of the sulfite reductase complex that catalyzes the 6-electron reduction of sulfite to sulfide. This is one of several activities required for the biosynthesis of L-cysteine from sulfate. The flavoprotein component catalyzes the electron flow from NADPH -&gt; FAD -&gt; FMN to the hemoprotein component. The sequence is that of Sulfite reductase [NADPH] flavoprotein alpha-component from Escherichia coli (strain ATCC 8739 / DSM 1576 / NBRC 3972 / NCIMB 8545 / WDCM 00012 / Crooks).